A 743-amino-acid chain; its full sequence is Catalase-peroxidase (743 aa).

The disordered stretch occupies residues 1–29 (MNAESGENAGGGCPLGHGAGAPRKRPSNR). Over residues 8-19 (NAGGGCPLGHGA) the composition is skewed to gly residues. The segment at residues 100-222 (WHSAGTYRIT…LGAVQMGLIY (123 aa)) is a cross-link (tryptophyl-tyrosyl-methioninium (Trp-Tyr) (with M-248)). Residue His-101 is the Proton acceptor of the active site. The segment at residues 222 to 248 (YVNPEGPNGNPDPKAAAVDIRETFARM) is a cross-link (tryptophyl-tyrosyl-methioninium (Tyr-Met) (with W-100)). His-263 provides a ligand contact to heme b.

It belongs to the peroxidase family. Peroxidase/catalase subfamily. As to quaternary structure, homodimer or homotetramer. The cofactor is heme b. Formation of the three residue Trp-Tyr-Met cross-link is important for the catalase, but not the peroxidase activity of the enzyme.

The catalysed reaction is H2O2 + AH2 = A + 2 H2O. The enzyme catalyses 2 H2O2 = O2 + 2 H2O. Functionally, bifunctional enzyme with both catalase and broad-spectrum peroxidase activity. The chain is Catalase-peroxidase from Stutzerimonas stutzeri (strain A1501) (Pseudomonas stutzeri).